The sequence spans 180 residues: Large ribosomal subunit protein uL5 (180 aa).

Belongs to the universal ribosomal protein uL5 family. In terms of assembly, part of the 50S ribosomal subunit; part of the 5S rRNA/L5/L18/L25 subcomplex. Contacts the 5S rRNA and the P site tRNA. Forms a bridge to the 30S subunit in the 70S ribosome.

Functionally, this is one of the proteins that bind and probably mediate the attachment of the 5S RNA into the large ribosomal subunit, where it forms part of the central protuberance. In the 70S ribosome it contacts protein S13 of the 30S subunit (bridge B1b), connecting the 2 subunits; this bridge is implicated in subunit movement. Contacts the P site tRNA; the 5S rRNA and some of its associated proteins might help stabilize positioning of ribosome-bound tRNAs. The sequence is that of Large ribosomal subunit protein uL5 from Symbiobacterium thermophilum (strain DSM 24528 / JCM 14929 / IAM 14863 / T).